The chain runs to 282 residues: Casein kinase II subunit beta-2 (282 aa).

Residues 1-92 (MYRERGMVGS…ESEVSGSDGE (92 aa)) form a disordered region. Positions 13–28 (EVVDRKRINEIHDNRP) are enriched in basic and acidic residues. Polar residues-rich tracts occupy residues 29-47 (SHSM…STSV) and 61-71 (RSGSISKTNIS). The segment covering 75–92 (DISDTDSEESEVSGSDGE) has biased composition (acidic residues).

The protein belongs to the casein kinase 2 subunit beta family. Heterotetramer of two catalytic alpha subunits and two regulatory beta subunits. Interacts with CCA1. In terms of processing, phosphorylated by alpha subunit.

The protein resides in the cytoplasm. It localises to the cytosol. Its subcellular location is the nucleus. Its function is as follows. Plays a complex role in regulating the basal catalytic activity of the alpha subunit. The tetrameric holoenzyme CK2, composed of two alpha and two beta subunits, phosphorylates the transcription factor PIF1 after an exposure to light, resulting in a proteasome-dependent degradation of PIF1 and promotion of photomorphogenesis. CK2 phosphorylates translation initiation factors. May participate in the regulation of the initiation of translation. The chain is Casein kinase II subunit beta-2 (CKB2) from Arabidopsis thaliana (Mouse-ear cress).